The sequence spans 685 residues: Glycine--tRNA ligase beta subunit (685 aa).

The protein belongs to the class-II aminoacyl-tRNA synthetase family. In terms of assembly, tetramer of two alpha and two beta subunits.

It localises to the cytoplasm. The catalysed reaction is tRNA(Gly) + glycine + ATP = glycyl-tRNA(Gly) + AMP + diphosphate. The protein is Glycine--tRNA ligase beta subunit of Leuconostoc mesenteroides subsp. mesenteroides (strain ATCC 8293 / DSM 20343 / BCRC 11652 / CCM 1803 / JCM 6124 / NCDO 523 / NBRC 100496 / NCIMB 8023 / NCTC 12954 / NRRL B-1118 / 37Y).